Reading from the N-terminus, the 331-residue chain is 6-phosphogluconolactonase (331 aa).

The protein belongs to the cycloisomerase 2 family.

It catalyses the reaction 6-phospho-D-glucono-1,5-lactone + H2O = 6-phospho-D-gluconate + H(+). It functions in the pathway carbohydrate degradation; pentose phosphate pathway; D-ribulose 5-phosphate from D-glucose 6-phosphate (oxidative stage): step 2/3. Its function is as follows. Catalyzes the hydrolysis of 6-phosphogluconolactone to 6-phosphogluconate. This is 6-phosphogluconolactonase from Salmonella gallinarum (strain 287/91 / NCTC 13346).